Here is a 96-residue protein sequence, read N- to C-terminus: Probable quinol oxidase subunit 4 (96 aa).

3 helical membrane-spanning segments follow: residues 8-28 (TVGFIASIVLTLLAVFVTLYT), 36-56 (VTIIFGFAFIQAALQLLMFMH), and 68-88 (FKVIFAIIITLVTVIGTYWVM).

This sequence belongs to the cytochrome c oxidase bacterial subunit 4 family.

It is found in the cell membrane. The enzyme catalyses 2 a quinol + O2 = 2 a quinone + 2 H2O. In terms of biological role, catalyzes quinol oxidation with the concomitant reduction of oxygen to water. This chain is Probable quinol oxidase subunit 4 (qoxD), found in Staphylococcus epidermidis (strain ATCC 35984 / DSM 28319 / BCRC 17069 / CCUG 31568 / BM 3577 / RP62A).